We begin with the raw amino-acid sequence, 93 residues long: Small ribosomal subunit protein uS19 (93 aa).

A disordered region spans residues Glu-73–Arg-93. Residues His-83 to Arg-93 show a composition bias toward basic and acidic residues.

This sequence belongs to the universal ribosomal protein uS19 family.

Protein S19 forms a complex with S13 that binds strongly to the 16S ribosomal RNA. In Streptomyces avermitilis (strain ATCC 31267 / DSM 46492 / JCM 5070 / NBRC 14893 / NCIMB 12804 / NRRL 8165 / MA-4680), this protein is Small ribosomal subunit protein uS19.